The following is a 329-amino-acid chain: DNA-directed RNA polymerase subunit alpha (329 aa).

Positions 1-234 are alpha N-terminal domain (alpha-NTD); the sequence is MQSAVNEFLT…QQLAVFVDLE (234 aa). Residues 248–329 are alpha C-terminal domain (alpha-CTD); it reads IDPVLLRPVD…WPPASLKNND (82 aa).

Belongs to the RNA polymerase alpha chain family. In terms of assembly, homodimer. The RNAP catalytic core consists of 2 alpha, 1 beta, 1 beta' and 1 omega subunit. When a sigma factor is associated with the core the holoenzyme is formed, which can initiate transcription.

It carries out the reaction RNA(n) + a ribonucleoside 5'-triphosphate = RNA(n+1) + diphosphate. Functionally, DNA-dependent RNA polymerase catalyzes the transcription of DNA into RNA using the four ribonucleoside triphosphates as substrates. This chain is DNA-directed RNA polymerase subunit alpha, found in Saccharophagus degradans (strain 2-40 / ATCC 43961 / DSM 17024).